An 814-amino-acid chain; its full sequence is MGANEFRFFLSCDINSPVTFRIEKLDGNLPVKKSSDSGVVSIAEEKKPELYIECALYIDGAPFGLPMRTRLKTTGPPYCWNELITLSSKYRDLTAHSQLAITVWDVSCGKTEGLIGGATVLLFNSKMQMKSGKQKLRLWQGKEADGSFPTSTPGKVPRHERGELERLEKLMNKYERGQIQSIDWLDRLMLKSLDTIKEQESTKHGSSHLFVVIDFCSFEHRVVFQESGANLFITAPIGSTNEFVTVWDTELGKTNPSENKQLKLARSLDRGIIDRDLKPSNIERKSIQRVLKYPPTRTLSGDERQLLWKFRFSLMSEKRALTKFLRCVEWSDVQEAKQAIQLMYKWEMIDVCDALELLSPLFESEEVRAYAVSVLERADDEELQCYLLQLVQALRFERSDRSCLSQFLVQRALQNIELASFLRWYVAVELHDHVYAKRFYSTYELLEENIIKLPPGVNGEDGYQLWQSLVRQTELTAQLCSITREVRNVRGNTQKKIEKLRQLLGGLLSELTYFEEPIRSPLTPNVLIKGIVAGESSLFKSALHPLRLTFRTPEEGGSCKLIFKKGDDLRQDQLVVQMVWLMDRLLKLENLDLCLTPYKVLATGHDEGMLEFIPSRSLAQILSEHRSITSYLQKFHPDEHAPFGITATCLDTFIKSCAGYSVITYILGIGDRHLDNLLLTDDGRLFHVDFAFILGRDPKPFPPPMKLCKEMVEAMGGAESQYYTRFKSYCCEAYNILRKSSNLILNLFHLMAGSTIPDIASDPEKGILKLQEKFRLDMDDEACIHFFQDLINESVSALFPQMVETIHRWAQYWR.

Residues 25–177 (LDGNLPVKKS…EKLMNKYERG (153 aa)) form the C2 PI3K-type domain. The 176-residue stretch at 274–449 (DRDLKPSNIE…YSTYELLEEN (176 aa)) folds into the PIK helical domain. The region spanning 532–799 (VAGESSLFKS…LINESVSALF (268 aa)) is the PI3K/PI4K catalytic domain. Positions 538-544 (LFKSALH) are G-loop. The catalytic loop stretch occupies residues 668–676 (GIGDRHLDN). The segment at 687 to 708 (HVDFAFILGRDPKPFPPPMKLC) is activation loop.

The protein belongs to the PI3/PI4-kinase family. As to quaternary structure, interacts with VPS15. Component of a complex made of VPS38/USL1 and PI3K main subunits such as VPS15, ATG6/VPS30 and VPS34. Binds directly to VPS38/USL1.

It carries out the reaction a 1,2-diacyl-sn-glycero-3-phospho-(1D-myo-inositol) + ATP = a 1,2-diacyl-sn-glycero-3-phospho-(1D-myo-inositol-3-phosphate) + ADP + H(+). The PI3K inhibitor LY294002 affects phosphatidylinositol 3-phosphate (PI3P) levels and triggers a decrease in proline, hydrophobic and aromatic amino acids, and sugars (e.g. raffinose) accumulation in response to salt treatment correlated with lower P5CS1 expression and higher ProDH1 expression, genes involved in proline biosynthesis and catabolism, respectively. Functionally, involved in the negative regulation of proline, hydrophobic and aromatic amino acids accumulation, especially in response to salt (NaCl), either through inhibition of their synthesis and/or promotion of their catabolism. Triggers defense responses (e.g. pathogenesis related (PR1 and PR5) gene expression and hydrogen peroxide H(2)O(2) burst) to the bacterial pathogen compatible Pseudomonas syringae pv tomato DC3000 (Pst DC3000) and incompatible Pst DC3000 (avrRpt2), by regulating reactive ogygen species (ROS) production and by promoting stomatal closure. This chain is Phosphatidylinositol 3-kinase VPS34, found in Arabidopsis thaliana (Mouse-ear cress).